The following is a 588-amino-acid chain: Myc box-dependent-interacting protein 1 (588 aa).

The residue at position 2 (Ala2) is an N-acetylalanine. An interaction with BIN2 region spans residues 2–122 (AEMGSKGVTA…DYHQKLVDQA (121 aa)). 2 coiled-coil regions span residues 15 to 42 (ASNVQKKLTRAQEKVLQKLGKADETKDE) and 193 to 274 (HLVA…EKQH). One can recognise a BAR domain in the interval 29 to 276 (VLQKLGKADE…LVSLEKQHGS (248 aa)). Residues 279 to 355 (FTVKAQPSDS…PKHTPSKEMK (77 aa)) are disordered. A phosphoserine mark is found at Ser296, Ser298, and Ser304. Phosphothreonine is present on Thr308. A phosphoserine mark is found at Ser324 and Ser332. A clathrin-binding region spans residues 379–422 (FEAPGPFSEQASLLDLDFEPLPPVASPVKAPTPSGQSIPWDLWE). The interval 448–483 (PSQTAEPGPAQPAEASEVVGGTQEPGETAASEATSS) is disordered. The span at 474-483 (ETAASEATSS) shows a compositional bias: low complexity. An SH3 domain is found at 515 to 588 (GFMFKVQAQH…FPENFTERVQ (74 aa)).

As to quaternary structure, heterodimer with AMPH. Binds SH3GLB1. Interacts (via SH3 domain) with DNM1. Interacts with SYNJ1. Interacts (via SH3 domain) with DNM2. Interacts with CLTC. Interacts with AP2A2. Interacts with AP2B1. Interacts with MYC (via N-terminal transactivation domain); the interaction requires the integrity of the conserved MYC box regions 1 and 2. Interacts with BIN2. Interacts with SNX4. Interacts (via BAR domain) with BACE1. Binds (via BAR domain) F-actin. Post-translationally, phosphorylated by protein kinase C. Highly expressed in the brain and muscle. Isoform AMPH2-1 is expressed only in the brain where it is concentrated in axon initial segments and nodes of Ranvier. Isoform AMPH2-2 is widely expressed.

It localises to the nucleus. The protein localises to the cytoplasm. The protein resides in the endosome. Its subcellular location is the cell membrane. It is found in the sarcolemma. It localises to the T-tubule. Is a key player in the control of plasma membrane curvature, and membrane shaping and remodeling. Required in muscle cells for the formation of T-tubules, tubular invaginations of the plasma membrane that function in depolarization-contraction coupling. Required in muscle cells for the formation of T-tubules, tubular invaginations of the plasma membrane that function in depolarization-contraction coupling. Is a negative regulator of endocytosis. Is also involved in the regulation of intracellular vesicles sorting, modulation of BACE1 trafficking and the control of amyloid-beta production. In neuronal circuits, endocytosis regulation may influence the internalization of PHF-tau aggregates. May be involved in the regulation of MYC activity and the control cell proliferation. The sequence is that of Myc box-dependent-interacting protein 1 (Bin1) from Rattus norvegicus (Rat).